The following is a 274-amino-acid chain: 2,3,4,5-tetrahydropyridine-2,6-dicarboxylate N-succinyltransferase (274 aa).

Substrate is bound by residues R107 and D144.

Belongs to the transferase hexapeptide repeat family. In terms of assembly, homotrimer.

It is found in the cytoplasm. The catalysed reaction is (S)-2,3,4,5-tetrahydrodipicolinate + succinyl-CoA + H2O = (S)-2-succinylamino-6-oxoheptanedioate + CoA. It functions in the pathway amino-acid biosynthesis; L-lysine biosynthesis via DAP pathway; LL-2,6-diaminopimelate from (S)-tetrahydrodipicolinate (succinylase route): step 1/3. The polypeptide is 2,3,4,5-tetrahydropyridine-2,6-dicarboxylate N-succinyltransferase (Paracoccus denitrificans (strain Pd 1222)).